The sequence spans 92 residues: Bombyxin A-6 (92 aa).

An N-terminal signal peptide occupies residues 1 to 19; that stretch reads MKILLAIALMLSTVMWVST. Pyrrolidone carboxylic acid is present on Q20. Disulfide bonds link C29–C79, C41–C92, and C78–C83. Residues 50-70 constitute a propeptide, c peptide like; the sequence is SGAQFASYGSAWLMPYSEGRG.

Belongs to the insulin family. Heterodimer of a B chain and an A chain linked by two disulfide bonds.

It localises to the secreted. Brain peptide responsible for activation of prothoracic glands to produce ecdysone in insects. This chain is Bombyxin A-6 (BBXA6), found in Bombyx mori (Silk moth).